The sequence spans 828 residues: Periplasmic nitrate reductase (828 aa).

Residues 1 to 31 (MKLSRRSFMKANAVAAAAAAAGLSVPGVARA) constitute a signal peptide (tat-type signal). Residues 39-95 (IKWDKAPCRFCGTGCGVLVGTQQGRVVACQGDPDAPVNRGLNCIKGYFLPKIMYGKD) enclose the 4Fe-4S Mo/W bis-MGD-type domain. Residues cysteine 46, cysteine 49, cysteine 53, and cysteine 81 each coordinate [4Fe-4S] cluster. Mo-bis(molybdopterin guanine dinucleotide) contacts are provided by residues lysine 83, glutamine 150, asparagine 175, cysteine 179, 212-219 (WGANMAEM), 243-247 (STYQH), 262-264 (QSD), methionine 372, glutamine 376, asparagine 482, 508-509 (SD), lysine 531, aspartate 558, and 718-727 (TGRVLEHWHT). Phenylalanine 794 serves as a coordination point for substrate. Positions 802 and 819 each coordinate Mo-bis(molybdopterin guanine dinucleotide).

The protein belongs to the prokaryotic molybdopterin-containing oxidoreductase family. NasA/NapA/NarB subfamily. Component of the periplasmic nitrate reductase NapAB complex composed of NapA and NapB. It depends on [4Fe-4S] cluster as a cofactor. The cofactor is Mo-bis(molybdopterin guanine dinucleotide). Predicted to be exported by the Tat system. The position of the signal peptide cleavage has not been experimentally proven.

Its subcellular location is the periplasm. It catalyses the reaction 2 Fe(II)-[cytochrome] + nitrate + 2 H(+) = 2 Fe(III)-[cytochrome] + nitrite + H2O. Functionally, catalytic subunit of the periplasmic nitrate reductase complex NapAB. Receives electrons from NapB and catalyzes the reduction of nitrate to nitrite. The protein is Periplasmic nitrate reductase of Escherichia coli O8 (strain IAI1).